The following is a 341-amino-acid chain: S-adenosylmethionine:tRNA ribosyltransferase-isomerase (341 aa).

Belongs to the QueA family. In terms of assembly, monomer.

The protein localises to the cytoplasm. It carries out the reaction 7-aminomethyl-7-carbaguanosine(34) in tRNA + S-adenosyl-L-methionine = epoxyqueuosine(34) in tRNA + adenine + L-methionine + 2 H(+). Its pathway is tRNA modification; tRNA-queuosine biosynthesis. Its function is as follows. Transfers and isomerizes the ribose moiety from AdoMet to the 7-aminomethyl group of 7-deazaguanine (preQ1-tRNA) to give epoxyqueuosine (oQ-tRNA). This chain is S-adenosylmethionine:tRNA ribosyltransferase-isomerase, found in Pelodictyon phaeoclathratiforme (strain DSM 5477 / BU-1).